Reading from the N-terminus, the 95-residue chain is MLKPLGNRVIIQKSEQEQTTKSGIVLTDSAKEKSNEGTIIAVGAGRILKDGSRVAPEVNEGDKVVFQQYAGTEVKRGDETYLIVNEEDILAIIES.

It belongs to the GroES chaperonin family. Heptamer of 7 subunits arranged in a ring. Interacts with the chaperonin GroEL.

Its subcellular location is the cytoplasm. Functionally, together with the chaperonin GroEL, plays an essential role in assisting protein folding. The GroEL-GroES system forms a nano-cage that allows encapsulation of the non-native substrate proteins and provides a physical environment optimized to promote and accelerate protein folding. GroES binds to the apical surface of the GroEL ring, thereby capping the opening of the GroEL channel. This chain is Co-chaperonin GroES, found in Staphylococcus saprophyticus subsp. saprophyticus (strain ATCC 15305 / DSM 20229 / NCIMB 8711 / NCTC 7292 / S-41).